Here is a 536-residue protein sequence, read N- to C-terminus: Chaperonin GroEL (536 aa).

ATP-binding positions include 29–32 (TLGP), 86–90 (DGTTT), Gly412, and Asp493.

Belongs to the chaperonin (HSP60) family. Forms a cylinder of 14 subunits composed of two heptameric rings stacked back-to-back. Interacts with the co-chaperonin GroES.

Its subcellular location is the cytoplasm. The catalysed reaction is ATP + H2O + a folded polypeptide = ADP + phosphate + an unfolded polypeptide.. Functionally, together with its co-chaperonin GroES, plays an essential role in assisting protein folding. The GroEL-GroES system forms a nano-cage that allows encapsulation of the non-native substrate proteins and provides a physical environment optimized to promote and accelerate protein folding. This Aster yellows witches'-broom phytoplasma (strain AYWB) protein is Chaperonin GroEL.